Consider the following 544-residue polypeptide: Chaperonin GroEL (544 aa).

ATP-binding positions include 29-32, 86-90, Gly413, 478-480, and Asp494; these read TLGP, DGTTT, and NAA.

Belongs to the chaperonin (HSP60) family. In terms of assembly, forms a cylinder of 14 subunits composed of two heptameric rings stacked back-to-back. Interacts with the co-chaperonin GroES.

It is found in the cytoplasm. It catalyses the reaction ATP + H2O + a folded polypeptide = ADP + phosphate + an unfolded polypeptide.. Together with its co-chaperonin GroES, plays an essential role in assisting protein folding. The GroEL-GroES system forms a nano-cage that allows encapsulation of the non-native substrate proteins and provides a physical environment optimized to promote and accelerate protein folding. The polypeptide is Chaperonin GroEL (Lysinibacillus sphaericus (strain C3-41)).